A 726-amino-acid chain; its full sequence is WD repeat and coiled-coil-containing protein (726 aa).

WD repeat units follow at residues Gly-55–Asn-98 and Lys-154–Cys-194. Residues Arg-502–Ser-574 are disordered. Over residues Gly-506–Asn-515 the composition is skewed to polar residues. The segment covering Phe-517 to Pro-533 has biased composition (basic and acidic residues). Over residues Ser-550 to Ser-574 the composition is skewed to polar residues. A coiled-coil region spans residues Ser-581–Asn-609.

The polypeptide is WD repeat and coiled-coil-containing protein (wdcp) (Xenopus laevis (African clawed frog)).